The following is a 108-amino-acid chain: Phosphoribosyl-ATP pyrophosphatase (108 aa).

Positions valine 88–lysine 108 are disordered. Residues glutamate 91–lysine 108 show a composition bias toward basic and acidic residues.

Belongs to the PRA-PH family.

The protein localises to the cytoplasm. It catalyses the reaction 1-(5-phospho-beta-D-ribosyl)-ATP + H2O = 1-(5-phospho-beta-D-ribosyl)-5'-AMP + diphosphate + H(+). Its pathway is amino-acid biosynthesis; L-histidine biosynthesis; L-histidine from 5-phospho-alpha-D-ribose 1-diphosphate: step 2/9. This Paracoccus denitrificans (strain Pd 1222) protein is Phosphoribosyl-ATP pyrophosphatase.